Consider the following 318-residue polypeptide: Transaldolase (318 aa).

The Schiff-base intermediate with substrate role is filled by Lys132.

It belongs to the transaldolase family. Type 1 subfamily. Homodimer.

It is found in the cytoplasm. It carries out the reaction D-sedoheptulose 7-phosphate + D-glyceraldehyde 3-phosphate = D-erythrose 4-phosphate + beta-D-fructose 6-phosphate. The protein operates within carbohydrate degradation; pentose phosphate pathway; D-glyceraldehyde 3-phosphate and beta-D-fructose 6-phosphate from D-ribose 5-phosphate and D-xylulose 5-phosphate (non-oxidative stage): step 2/3. Its function is as follows. Transaldolase is important for the balance of metabolites in the pentose-phosphate pathway. The protein is Transaldolase of Hamiltonella defensa subsp. Acyrthosiphon pisum (strain 5AT).